We begin with the raw amino-acid sequence, 273 residues long: Large ribosomal subunit protein uL2 (273 aa).

Disordered regions lie at residues 34-54 (LEKK…TRHI) and 223-273 (VAMN…RRRK).

It belongs to the universal ribosomal protein uL2 family. In terms of assembly, part of the 50S ribosomal subunit. Forms a bridge to the 30S subunit in the 70S ribosome.

In terms of biological role, one of the primary rRNA binding proteins. Required for association of the 30S and 50S subunits to form the 70S ribosome, for tRNA binding and peptide bond formation. It has been suggested to have peptidyltransferase activity; this is somewhat controversial. Makes several contacts with the 16S rRNA in the 70S ribosome. In Pseudomonas aeruginosa (strain LESB58), this protein is Large ribosomal subunit protein uL2.